Here is a 397-residue protein sequence, read N- to C-terminus: Glia-derived nexin (397 aa).

The first 19 residues, 1–19 (MNWHFPFFILTTVTLSSVY), serve as a signal peptide directing secretion. N-linked (GlcNAc...) asparagine glycosylation is present at N159.

It belongs to the serpin family.

It is found in the secreted. It localises to the extracellular space. Functionally, serine protease inhibitor with activity toward thrombin, trypsin, and urokinase. Promotes neurite extension by inhibiting thrombin. Binds heparin. The protein is Glia-derived nexin (Serpine2) of Rattus norvegicus (Rat).